A 170-amino-acid chain; its full sequence is Anaphase-promoting complex subunit SWM1 (170 aa).

Basic and acidic residues-rich tracts occupy residues 48-67 and 132-141; these read NTRTDAEEGRAPQDGERNSN and GANEPRKETI. Disordered regions lie at residues 48-81 and 122-141; these read NTRTDAEEGRAPQDGERNSNVRESAQGKALMTSE and LNGGTNSRNDGANEPRKETI.

The protein belongs to the APC13 family. The APC/C is composed of at least 13 subunits that stay tightly associated throughout the cell cycle: APC1, APC2, APC4, APC5, APC9, APC11, CDC16, CDC23, CDC26, CDC27, DOC1, MND2 and SWM1. SWM1 interacts directly with CDC23 and APC5, and is required to tether APC9, CDC16, CDC26 and CDC27 to the complex.

It participates in protein modification; protein ubiquitination. In terms of biological role, component of the anaphase promoting complex/cyclosome (APC/C), a cell cycle-regulated E3 ubiquitin-protein ligase complex that controls progression through mitosis and the G1 phase of the cell cycle. The APC/C is thought to confer substrate specificity and, in the presence of ubiquitin-conjugating E2 enzymes, it catalyzes the formation of protein-ubiquitin conjugates that are subsequently degraded by the 26S proteasome. In early mitosis, the APC/C is activated by CDC20 and targets securin PDS1, the B-type cyclin CLB5, and other anaphase inhibitory proteins for proteolysis, thereby triggering the separation of sister chromatids at the metaphase-to-anaphase transition. In late mitosis and in G1, degradation of CLB5 allows activation of the APC/C by CDH1, which is needed to destroy CDC20 and the B-type cyclin CLB2 to allow exit from mitosis and creating the low CDK state necessary for cytokinesis and for reforming prereplicative complexes in G1 prior to another round of replication. SWM1 is required for APC/C activity in meiosis. The protein is Anaphase-promoting complex subunit SWM1 (SWM1) of Saccharomyces cerevisiae (strain ATCC 204508 / S288c) (Baker's yeast).